The primary structure comprises 118 residues: Urease subunit beta (118 aa).

The protein belongs to the urease beta subunit family. Heterotrimer of UreA (gamma), UreB (beta) and UreC (alpha) subunits. Three heterotrimers associate to form the active enzyme.

It is found in the cytoplasm. It carries out the reaction urea + 2 H2O + H(+) = hydrogencarbonate + 2 NH4(+). It functions in the pathway nitrogen metabolism; urea degradation; CO(2) and NH(3) from urea (urease route): step 1/1. This Aliivibrio fischeri (strain ATCC 700601 / ES114) (Vibrio fischeri) protein is Urease subunit beta.